The primary structure comprises 369 residues: Phospho-N-acetylmuramoyl-pentapeptide-transferase (369 aa).

Helical transmembrane passes span I13 to L33, L49 to L69, M95 to A115, L119 to I139, L154 to A174, W183 to V203, I215 to A235, T237 to A257, A281 to V301, and V346 to S366.

This sequence belongs to the glycosyltransferase 4 family. MraY subfamily. Mg(2+) serves as cofactor.

It is found in the cell inner membrane. The enzyme catalyses UDP-N-acetyl-alpha-D-muramoyl-L-alanyl-gamma-D-glutamyl-meso-2,6-diaminopimeloyl-D-alanyl-D-alanine + di-trans,octa-cis-undecaprenyl phosphate = di-trans,octa-cis-undecaprenyl diphospho-N-acetyl-alpha-D-muramoyl-L-alanyl-D-glutamyl-meso-2,6-diaminopimeloyl-D-alanyl-D-alanine + UMP. The protein operates within cell wall biogenesis; peptidoglycan biosynthesis. Catalyzes the initial step of the lipid cycle reactions in the biosynthesis of the cell wall peptidoglycan: transfers peptidoglycan precursor phospho-MurNAc-pentapeptide from UDP-MurNAc-pentapeptide onto the lipid carrier undecaprenyl phosphate, yielding undecaprenyl-pyrophosphoryl-MurNAc-pentapeptide, known as lipid I. This chain is Phospho-N-acetylmuramoyl-pentapeptide-transferase, found in Nostoc sp. (strain PCC 7120 / SAG 25.82 / UTEX 2576).